Reading from the N-terminus, the 996-residue chain is MYQQEEYEVNNEGQEDVSKINALNLKWTLGFNFQLTDGVHNLTNEKRKEIFYPVAHTGVIYDYENNTQRLLQGHCNRITATAYCKFSDIIVTADCGPDSMLVVWDASTGIPKKTIFEPHPNGCQALDISQDGQFIVTLSKEANTDTDVQSLSLWEWNKDDEPCLITNEFDRRIKDYQYFVRFNSDDNTEFATTGKTRIVFWRREGEQKGFNYYSPGNIPSLKVLTQTVFIPDNTQVVTGTTDGHIIVWDISLIIEKVDTPKERRAIKLVDLMNKSKKPDGKKGSNSINILKIQDNYLVIGSSNGSIRFYDFQYRIIAWFEDAIIGSISNISFANTPMIEDNEDEDGFDDERKDKGENEPKFICPDFIVVDLDATITMLNYKLFEELDDEKKKGTTLMKSIVSPIIAMSCRPNSNVIGICCENGYLYEWNFQEKSSVLSILRVFDTDKENIPNCIDYSPDGNWLSVATKSGKIHIFDCKEKQWQNSVLEVSENEQGKPKVNMQVFSSDSKNLATMDADYAVSLFTIDHRQFDVNIPEKEWQFVGKHRIHHSEIKSIAFGESKNENDKKYYRLFSIGADMKMVEYEVLEIDYSKQKEKGQQINYIDRLKLKSIYPIEQETIPTACIWYPINMYKEDVLLTVNEEFKIKLWQFMKDNFKFCKKTCLGPIYGGAINKLLILNQNDAQNDYQDKYLAYSTKEKVVGIIKLPLEGNPNQTMGLIAHPDKITSISCSNDGKHFFSSGSDDYCVNVWSVNVQALEQIFATNPNEDPYPKLLEGGEDGQTHQDLKNFFYYSQIRSKDEHTTKARKLDGKVPLIAIPDMMRSMGYYPTNKEIENMQNEIRFSKYLDPGEQVEELDLNMFLKLFVNHRPVQGIGKSKIAESLNTLTKSLSDSAKEIAEQAKGQSVQPKTYNIDGIGEISLQDLKKILTTEGERMTNEEFDECLKILCGENEDQIPQQINVNNLCEDILGFEDLEGEERDDNIEDQYEDEENEEYDQD.

11 WD repeats span residues 73 to 114 (GHCN…PKKT), 118 to 164 (PHPN…EPCL), 168 to 211 (EFDR…KGFN), 219 to 258 (PSLK…EKVD), 282 to 319 (KGSN…IAWF), 399 to 438 (SIVS…SVLS), 445 to 485 (TDKE…WQNS), 494 to 533 (QGKP…FDVN), 547 to 593 (IHHS…YSKQ), 615 to 658 (EQET…FKFC), and 719 to 759 (AHPD…LEQI). The tract at residues 971-996 (DLEGEERDDNIEDQYEDEENEEYDQD) is disordered.

It is found in the cell projection. It localises to the cilium. In terms of biological role, as component of a spoke-associated complex, regulates ciliary mobility by mediating a stable and functional assembly of the radial spoke 3 (RS3). The chain is Cilia- and flagella-associated protein 251 from Tetrahymena thermophila (strain SB210).